Reading from the N-terminus, the 419-residue chain is MHLDWTLVLASRIRKVKCDEKKPCCQKCIDTGRTCDGYESPFRVVTSRSIINGARASGIPGAASRPVRPALTEISPADIDLLNRYFSTKTMFDVKLGCDEEAREVLEASLTDPTVRHAVSSLRSLREHLETSGDVSASAAQQSPSYGYDYGVQQYCMALGGLASNLSSPGSNALKSALLCCQIFISIEQVRGNYGTMAQHIIQGLGIMHEYRARPTLDDANNLVPAHHAQLPLLDAFVIKLFAAPCKFAEPSATADKEGGKAVSMCAISRHEQTVGSRNLRTIVPDMRTELTRISTSTLDFLVKVSSVDSAGNALRLLPEKTALLESLKSWLMDLELVHADIKSPGTEPLAVSFLRLFHQILKIILVEALNSSSNLQAELRTENDRLQGIGSIIDERVQSQRKNSSALDLIDNRLKCPA.

The segment at residues 12-35 is a DNA-binding region (zn(2)-C6 fungal-type); that stretch reads RIRKVKCDEKKPCCQKCIDTGRTC.

The protein resides in the nucleus. Its function is as follows. Transcription factor that may coregulate the expression of the gene cluster that mediates the biosynthesis of the lipopeptide antibiotics leucinostatins that show extensive biological activities, including antimalarial, antiviral, antibacterial, antifungal, and antitumor activities, as well as phytotoxic. In Purpureocillium lilacinum (Paecilomyces lilacinus), this protein is Transcription regulator lscL.